A 550-amino-acid chain; its full sequence is MSAKDILFDASARAKLKVGVDKLADAVKVTLGPAGRNVLIDKKFGAPTSTKDGVTVAKEIELEDSFENMGAQMVREVSSKTSDVAGDGTTTATVLAQAIYREGLKNVAAGARPIDLKRGIDKAVKEVIGELRTISNDISGKIEIAQVGTISANNDPEIGQLIADAMEKVGKDGVITVEEAKGMDTELKVVEGMQFDRGYLSPYFVTNSEKMDAELEDPYILIHDKKISNMKDLLPILEKTAQSGRPLMIISEDIEGEALATLVVNKLRGTLKVCAVKAPGFGDRRKAMLEDIAILTGGTVISEEKGYKLENATISYLGQAATVTVDKDNTTIVEGKGQADDIKARINEIKNQIDASTSDYDTEKLQERLAKLSGGVAVINIGASTEVEMKEKKARVEDALHATRAAVQEGIVAGGGVALIRAAKGLDNVQPENEDQKTGVEIVRRALEEPLRQIVANTGTTDGAVVVERVKQGEGDFGFNARTEEYEKMTEAGVVDPTKVTRTALENAASVAGILLTTEAAITDIKEEGGDMPAMPPGGMGGMGGMGGMM.

Residues 30–33 (TLGP), lysine 51, 87–91 (DGTTT), glycine 415, and aspartate 496 each bind ATP. Residues 528 to 550 (EGGDMPAMPPGGMGGMGGMGGMM) are disordered. The segment covering 538-550 (GGMGGMGGMGGMM) has biased composition (gly residues).

This sequence belongs to the chaperonin (HSP60) family. In terms of assembly, forms a cylinder of 14 subunits composed of two heptameric rings stacked back-to-back. Interacts with the co-chaperonin GroES.

It is found in the cytoplasm. The catalysed reaction is ATP + H2O + a folded polypeptide = ADP + phosphate + an unfolded polypeptide.. Its function is as follows. Together with its co-chaperonin GroES, plays an essential role in assisting protein folding. The GroEL-GroES system forms a nano-cage that allows encapsulation of the non-native substrate proteins and provides a physical environment optimized to promote and accelerate protein folding. The chain is Chaperonin GroEL from Chlorobium phaeobacteroides (strain BS1).